The sequence spans 253 residues: ATP synthase subunit b 1 (253 aa).

A helical membrane pass occupies residues 5 to 27 (GWTVALQAVNFLILVLLLRHFLY).

It belongs to the ATPase B chain family. As to quaternary structure, F-type ATPases have 2 components, F(1) - the catalytic core - and F(0) - the membrane proton channel. F(1) has five subunits: alpha(3), beta(3), gamma(1), delta(1), epsilon(1). F(0) has three main subunits: a(1), b(2) and c(10-14). The alpha and beta chains form an alternating ring which encloses part of the gamma chain. F(1) is attached to F(0) by a central stalk formed by the gamma and epsilon chains, while a peripheral stalk is formed by the delta and b chains.

The protein resides in the cell inner membrane. In terms of biological role, f(1)F(0) ATP synthase produces ATP from ADP in the presence of a proton or sodium gradient. F-type ATPases consist of two structural domains, F(1) containing the extramembraneous catalytic core and F(0) containing the membrane proton channel, linked together by a central stalk and a peripheral stalk. During catalysis, ATP synthesis in the catalytic domain of F(1) is coupled via a rotary mechanism of the central stalk subunits to proton translocation. Functionally, component of the F(0) channel, it forms part of the peripheral stalk, linking F(1) to F(0). This Rhodospirillum centenum (strain ATCC 51521 / SW) protein is ATP synthase subunit b 1.